Consider the following 105-residue polypeptide: Large ribosomal subunit protein uL24 (105 aa).

The tract at residues 40–61 (RIKKHTPQSANERGASSGGIVT) is disordered.

The protein belongs to the universal ribosomal protein uL24 family. In terms of assembly, part of the 50S ribosomal subunit.

One of two assembly initiator proteins, it binds directly to the 5'-end of the 23S rRNA, where it nucleates assembly of the 50S subunit. Its function is as follows. One of the proteins that surrounds the polypeptide exit tunnel on the outside of the subunit. This Mycobacteroides abscessus (strain ATCC 19977 / DSM 44196 / CCUG 20993 / CIP 104536 / JCM 13569 / NCTC 13031 / TMC 1543 / L948) (Mycobacterium abscessus) protein is Large ribosomal subunit protein uL24.